A 660-amino-acid polypeptide reads, in one-letter code: Bifunctional polymyxin resistance protein ArnA (660 aa).

The formyltransferase ArnAFT stretch occupies residues 1 to 304 (MKTVVFAYHD…MLGLVQGSRL (304 aa)). 86 to 88 (HLI) contributes to the (6R)-10-formyltetrahydrofolate binding site. Residue H104 is the Proton donor; for formyltransferase activity of the active site. Residues R114 and 136–140 (VKRAD) each bind (6R)-10-formyltetrahydrofolate. The dehydrogenase ArnADH stretch occupies residues 314–660 (RRTRVLILGV…RTVDLTDKPS (347 aa)). NAD(+)-binding positions include D347 and 368-369 (DI). Residues A393, Y398, and 432–433 (TS) each bind UDP-alpha-D-glucuronate. The Proton acceptor; for decarboxylase activity role is filled by E434. Residues R460, N492, 526 to 535 (KLIDGGKQKR), and Y613 each bind UDP-alpha-D-glucuronate. R619 (proton donor; for decarboxylase activity) is an active-site residue.

It in the N-terminal section; belongs to the Fmt family. UDP-L-Ara4N formyltransferase subfamily. In the C-terminal section; belongs to the NAD(P)-dependent epimerase/dehydratase family. UDP-glucuronic acid decarboxylase subfamily. As to quaternary structure, homohexamer, formed by a dimer of trimers.

The enzyme catalyses UDP-alpha-D-glucuronate + NAD(+) = UDP-beta-L-threo-pentopyranos-4-ulose + CO2 + NADH. The catalysed reaction is UDP-4-amino-4-deoxy-beta-L-arabinose + (6R)-10-formyltetrahydrofolate = UDP-4-deoxy-4-formamido-beta-L-arabinose + (6S)-5,6,7,8-tetrahydrofolate + H(+). It participates in nucleotide-sugar biosynthesis; UDP-4-deoxy-4-formamido-beta-L-arabinose biosynthesis; UDP-4-deoxy-4-formamido-beta-L-arabinose from UDP-alpha-D-glucuronate: step 1/3. The protein operates within nucleotide-sugar biosynthesis; UDP-4-deoxy-4-formamido-beta-L-arabinose biosynthesis; UDP-4-deoxy-4-formamido-beta-L-arabinose from UDP-alpha-D-glucuronate: step 3/3. Its pathway is bacterial outer membrane biogenesis; lipopolysaccharide biosynthesis. Bifunctional enzyme that catalyzes the oxidative decarboxylation of UDP-glucuronic acid (UDP-GlcUA) to UDP-4-keto-arabinose (UDP-Ara4O) and the addition of a formyl group to UDP-4-amino-4-deoxy-L-arabinose (UDP-L-Ara4N) to form UDP-L-4-formamido-arabinose (UDP-L-Ara4FN). The modified arabinose is attached to lipid A and is required for resistance to polymyxin and cationic antimicrobial peptides. This Shigella flexneri protein is Bifunctional polymyxin resistance protein ArnA.